Here is a 443-residue protein sequence, read N- to C-terminus: UDP-N-acetylmuramate--L-alanine ligase (443 aa).

110–116 lines the ATP pocket; it reads GAHGKTS.

This sequence belongs to the MurCDEF family.

It localises to the cytoplasm. The catalysed reaction is UDP-N-acetyl-alpha-D-muramate + L-alanine + ATP = UDP-N-acetyl-alpha-D-muramoyl-L-alanine + ADP + phosphate + H(+). Its pathway is cell wall biogenesis; peptidoglycan biosynthesis. In terms of biological role, cell wall formation. This is UDP-N-acetylmuramate--L-alanine ligase from Streptococcus equi subsp. zooepidemicus (strain H70).